Here is a 504-residue protein sequence, read N- to C-terminus: Putative pentatricopeptide repeat-containing protein At3g28640 (504 aa).

9 PPR repeats span residues asparagine 77–glutamate 107, serine 115–leucine 149, aspartate 151–proline 181, aspartate 182–proline 216, aspartate 217–glutamate 251, aspartate 253–serine 287, tryptophan 288–proline 319, aspartate 320–arginine 350, and lysine 356–serine 390. The interval valine 391–aspartate 470 is type E motif. Residues glycine 471–leucine 501 form a type E(+) motif region.

This sequence belongs to the PPR family. PCMP-E subfamily.

The chain is Putative pentatricopeptide repeat-containing protein At3g28640 (PCMP-E79) from Arabidopsis thaliana (Mouse-ear cress).